The following is a 101-amino-acid chain: Small ribosomal subunit protein uS14 (101 aa).

This sequence belongs to the universal ribosomal protein uS14 family. In terms of assembly, part of the 30S ribosomal subunit. Contacts proteins S3 and S10.

In terms of biological role, binds 16S rRNA, required for the assembly of 30S particles and may also be responsible for determining the conformation of the 16S rRNA at the A site. This chain is Small ribosomal subunit protein uS14, found in Polynucleobacter asymbioticus (strain DSM 18221 / CIP 109841 / QLW-P1DMWA-1) (Polynucleobacter necessarius subsp. asymbioticus).